A 517-amino-acid polypeptide reads, in one-letter code: ATP synthase subunit alpha (517 aa).

175-182 (GDRQTGKT) contacts ATP.

This sequence belongs to the ATPase alpha/beta chains family. As to quaternary structure, F-type ATPases have 2 components, CF(1) - the catalytic core - and CF(0) - the membrane proton channel. CF(1) has five subunits: alpha(3), beta(3), gamma(1), delta(1), epsilon(1). CF(0) has three main subunits: a(1), b(2) and c(9-12). The alpha and beta chains form an alternating ring which encloses part of the gamma chain. CF(1) is attached to CF(0) by a central stalk formed by the gamma and epsilon chains, while a peripheral stalk is formed by the delta and b chains.

Its subcellular location is the cell membrane. It carries out the reaction ATP + H2O + 4 H(+)(in) = ADP + phosphate + 5 H(+)(out). Its function is as follows. Produces ATP from ADP in the presence of a proton gradient across the membrane. The alpha chain is a regulatory subunit. This chain is ATP synthase subunit alpha, found in Herpetosiphon aurantiacus (strain ATCC 23779 / DSM 785 / 114-95).